The following is a 361-amino-acid chain: G kinase-anchoring protein 1-A (361 aa).

Disordered stretches follow at residues 22–111 (DSSS…EDWQ) and 140–183 (FEES…KDFQ). Residues 35–48 (AHSSGKAHSGSAAR) are compositionally biased toward low complexity. Residues 51–79 (NKGNEKKKEKRRKKKEQQQSEANELRNLA) adopt a coiled-coil conformation. Over residues 158–168 (KVNKKDKRKNN) the composition is skewed to basic residues. Coiled coils occupy residues 246–296 (KDGR…QEGE) and 326–346 (AALEQERSKVKILQAEQVKYQ).

This sequence belongs to the GKAP1 family.

The protein resides in the golgi apparatus. May play a role in the regulation of insulin-dependent IRS1 tyrosine phosphorylation in adipocytes. The chain is G kinase-anchoring protein 1-A (gkap1-a) from Xenopus laevis (African clawed frog).